Here is a 202-residue protein sequence, read N- to C-terminus: IMP cyclohydrolase (202 aa).

This sequence belongs to the archaeal IMP cyclohydrolase family.

It catalyses the reaction IMP + H2O = 5-formamido-1-(5-phospho-D-ribosyl)imidazole-4-carboxamide. The protein operates within purine metabolism; IMP biosynthesis via de novo pathway; IMP from 5-formamido-1-(5-phospho-D-ribosyl)imidazole-4-carboxamide: step 1/1. Catalyzes the cyclization of 5-formylamidoimidazole-4-carboxamide ribonucleotide to IMP. The protein is IMP cyclohydrolase of Methanothermobacter thermautotrophicus (strain ATCC 29096 / DSM 1053 / JCM 10044 / NBRC 100330 / Delta H) (Methanobacterium thermoautotrophicum).